Consider the following 380-residue polypeptide: Queuine tRNA-ribosyltransferase (380 aa).

Residue D96 is the Proton acceptor of the active site. Residues 96–100 (DSGGF), D150, Q193, and G220 each bind substrate. The interval 251-257 (GVGAPDS) is RNA binding. The Nucleophile role is filled by D270. Residues 275-279 (TRIAR) are RNA binding; important for wobble base 34 recognition. Zn(2+) is bound by residues C308, C310, C313, and H339.

Belongs to the queuine tRNA-ribosyltransferase family. As to quaternary structure, homodimer. Within each dimer, one monomer is responsible for RNA recognition and catalysis, while the other monomer binds to the replacement base PreQ1. Zn(2+) serves as cofactor.

The catalysed reaction is 7-aminomethyl-7-carbaguanine + guanosine(34) in tRNA = 7-aminomethyl-7-carbaguanosine(34) in tRNA + guanine. Its pathway is tRNA modification; tRNA-queuosine biosynthesis. Its function is as follows. Catalyzes the base-exchange of a guanine (G) residue with the queuine precursor 7-aminomethyl-7-deazaguanine (PreQ1) at position 34 (anticodon wobble position) in tRNAs with GU(N) anticodons (tRNA-Asp, -Asn, -His and -Tyr). Catalysis occurs through a double-displacement mechanism. The nucleophile active site attacks the C1' of nucleotide 34 to detach the guanine base from the RNA, forming a covalent enzyme-RNA intermediate. The proton acceptor active site deprotonates the incoming PreQ1, allowing a nucleophilic attack on the C1' of the ribose to form the product. After dissociation, two additional enzymatic reactions on the tRNA convert PreQ1 to queuine (Q), resulting in the hypermodified nucleoside queuosine (7-(((4,5-cis-dihydroxy-2-cyclopenten-1-yl)amino)methyl)-7-deazaguanosine). The chain is Queuine tRNA-ribosyltransferase from Streptococcus pneumoniae (strain ATCC BAA-255 / R6).